The chain runs to 1144 residues: Nitric oxide synthase, inducible (1144 aa).

Positions 23-27 match the DINNN-motif; mediates interaction with SPSB1, SPSB2 and SPSB4 motif; sequence DINNN. Positions 37-59 are disordered; the sequence is SPTIQDDPKSHQNGSPQLLTGTA. Over residues 47-59 the composition is skewed to polar residues; the sequence is HQNGSPQLLTGTA. Positions 104 and 109 each coordinate Zn(2+). Residue S112 coordinates (6R)-L-erythro-5,6,7,8-tetrahydrobiopterin. C194 contributes to the heme b binding site. Residues Q257, W366, Y367, and E371 each contribute to the L-arginine site. The (6R)-L-erythro-5,6,7,8-tetrahydrobiopterin site is built by R375, I456, W457, and F470. Y485 lines the heme b pocket. The tract at residues 509 to 529 is calmodulin-binding; it reads FRVLVKVVFFASMLMRKVMAS. Residues 533-671 form the Flavodoxin-like domain; it reads ATVLFATETG…AFRSWAVQTF (139 aa). Positions 539, 540, 541, 543, and 544 each coordinate FMN. Position 569 is a phosphotyrosine (Y569). FMN contacts are provided by S585, T586, S622, C629, E655, and Q659. In terms of domain architecture, FAD-binding FR-type spans 724–964; that stretch reads KNVFTMRLKS…VRSVSGFQLP (241 aa). Residue R744 coordinates NADP(+). H766, R900, Y902, S903, T918, and A920 together coordinate FAD. T923 contacts NADP(+). Positions 924, 937, 938, and 939 each coordinate FAD. NADP(+) is bound by residues T978, R1011, S1040, R1041, K1047, Y1049, Q1051, and D1084.

It belongs to the NOS family. As to quaternary structure, homodimer. Interacts with NHERF1. Interacts with GAPDH. Interacts with S100A8 and S100A9 to form the iNOS-S100A8/9 transnitrosylase complex. Interacts with SPSB1, SPSB2 and SPSB4. Interacts with ELOC and CUL5 in the presence of SPSB1 or SPSB2 or SPSB4. Forms a complex with ASL, ASS1 and HSP90AA1; the complex regulates cell-autonomous L-arginine synthesis and citrulline recycling while channeling extracellular L-arginine to nitric oxide synthesis pathway. Requires heme b as cofactor. The cofactor is FAD. It depends on FMN as a cofactor. (6R)-L-erythro-5,6,7,8-tetrahydrobiopterin is required as a cofactor. Polyubiquitinated; mediated by SPSB1, SPSB2 and SPSB4, leading to proteasomal degradation. As to expression, macrophages.

It is found in the cytoplasm. Its subcellular location is the cytosol. The catalysed reaction is 2 L-arginine + 3 NADPH + 4 O2 + H(+) = 2 L-citrulline + 2 nitric oxide + 3 NADP(+) + 4 H2O. Its activity is regulated as follows. Not stimulated by calcium/calmodulin. Aspirin inhibits expression and function of this enzyme and effects may be exerted at the level of translational/post-translational modification and directly on the catalytic activity. Functionally, produces nitric oxide (NO) which is a messenger molecule with diverse functions throughout the body. In macrophages, NO mediates tumoricidal and bactericidal actions. Also has nitrosylase activity and mediates cysteine S-nitrosylation of cytoplasmic target proteins such PTGS2/COX2. As component of the iNOS-S100A8/9 transnitrosylase complex involved in the selective inflammatory stimulus-dependent S-nitrosylation of GAPDH implicated in regulation of the GAIT complex activity and probably multiple targets including ANXA5, EZR, MSN and VIM. Involved in inflammation, enhances the synthesis of pro-inflammatory mediators such as IL6 and IL8. The polypeptide is Nitric oxide synthase, inducible (Nos2) (Mus musculus (Mouse)).